We begin with the raw amino-acid sequence, 4334 residues long: Cytoplasmic dynein 2 heavy chain 1 (4334 aa).

Residues 1-1704 (MSSDSRKTFV…KVAMAEATFD (1704 aa)) are stem. Position 150-157 (150-157 (LGTAVRKG)) interacts with ATP. The stretch at 1026 to 1097 (QEAKGLTAKL…AHLEEQKGNL (72 aa)) forms a coiled coil. AAA stretches follow at residues 1705–1929 (YTWE…VLGI), 1996–2211 (KALA…KAFQ), 2299–2544 (GMDE…WING), and 2641–2882 (GYER…SSGS). ATP contacts are provided by residues 1743 to 1750 (GPAGTGKT), 2034 to 2041 (GPSGSGKS), 2334 to 2341 (GPEGCGKG), and 2679 to 2686 (GNSGVGRR). The segment at 2897-3185 (QIYNRKRTQV…ISVDKAESVL (289 aa)) is stalk. 2 coiled-coil regions span residues 2930-2998 (LSAE…SEVQ) and 3120-3199 (ERVS…RGEK). AAA regions lie at residues 3260 to 3492 (LSSE…TVEK) and 3701 to 3917 (MSSF…VITL).

It belongs to the dynein heavy chain family. The cytoplasmic dynein complex 2 is probably composed by a DHC1B homodimer and a number of D1BLIC light intermediate chains. Interacts with FAP133, FLA10 and LC8.

It is found in the cytoplasm. Its subcellular location is the cytoskeleton. It localises to the flagellum basal body. The protein resides in the cell projection. The protein localises to the cilium. It is found in the flagellum membrane. Functionally, may function as a motor for intraflagellar retrograde transport. Functions in flagellar biogenesis. This is Cytoplasmic dynein 2 heavy chain 1 (DHC1B) from Chlamydomonas reinhardtii (Chlamydomonas smithii).